Reading from the N-terminus, the 447-residue chain is UPF0210 protein LAF_0976 (447 aa).

The protein belongs to the UPF0210 family. Homodimer.

The sequence is that of UPF0210 protein LAF_0976 from Limosilactobacillus fermentum (strain NBRC 3956 / LMG 18251) (Lactobacillus fermentum).